Consider the following 349-residue polypeptide: MQQKNKYIRIQEFLKQNKFPDFRMNQIKNAVFQGRINHFNEITVLPKSLRKLLIEEFGESILNIAPLKVQHSEQVTKVLFEISGDEKIETVNMKYKAGWESFCISSQCGCHFGCKFCATGDIGLKRNLTSDEMTDQILYFHLKGHSIDSISFMGMGEALANVQVFDALHVLTNPELFALSPRRLSISTIGIIPGIKKITQDYPQVNLTFSLHSPFNEQRSKLMPINERYPLLEVMDTLDEHIRVTSRKVYIAYIMLPGVNDSIDHANEVVNLLRSRYKRGNLFHVNIIRYNPTVSSPMRFEEVNEKQVVNFYKKLKSAGINVTVRSQFGIDIDAACGQLYGNYQKNKNQ.

Residue Glu-89 is the Proton acceptor of the active site. The 236-residue stretch at 96 to 331 (KAGWESFCIS…VTVRSQFGID (236 aa)) folds into the Radical SAM core domain. Cysteines 103 and 336 form a disulfide. 3 residues coordinate [4Fe-4S] cluster: Cys-110, Cys-114, and Cys-117. S-adenosyl-L-methionine contacts are provided by residues 156-157 (GE), Ser-187, 210-212 (SLH), and Asn-291. The active-site S-methylcysteine intermediate is Cys-336.

The protein belongs to the radical SAM superfamily. RlmN family. Cfr subfamily. The cofactor is [4Fe-4S] cluster.

The protein localises to the cytoplasm. The enzyme catalyses adenosine(2503) in 23S rRNA + 2 reduced [2Fe-2S]-[ferredoxin] + 2 S-adenosyl-L-methionine = 8-methyladenosine(2503) in 23S rRNA + 5'-deoxyadenosine + L-methionine + 2 oxidized [2Fe-2S]-[ferredoxin] + S-adenosyl-L-homocysteine. Its function is as follows. Specifically methylates position 8 of adenine 2503 in 23S rRNA. Confers resistance to some classes of antibiotics. This is Ribosomal RNA large subunit methyltransferase Cfr from Bacillus velezensis (strain DSM 23117 / BGSC 10A6 / LMG 26770 / FZB42) (Bacillus amyloliquefaciens subsp. plantarum).